A 140-amino-acid polypeptide reads, in one-letter code: Arsenate reductase ArsI2 (140 aa).

The active-site Nucleophile; cysteine thioarsenate intermediate is the cysteine 10.

The protein belongs to the ArsC family.

The catalysed reaction is [glutaredoxin]-dithiol + arsenate + glutathione + H(+) = glutathionyl-S-S-[glutaredoxin] + arsenite + H2O. Its function is as follows. Catalyzes the reduction of arsenate [As(V)] to arsenite [As(III)]. Does not constitute the major arsenate reductase in cells: essential only in the absence of ArsC (AC P74313). The polypeptide is Arsenate reductase ArsI2 (Synechocystis sp. (strain ATCC 27184 / PCC 6803 / Kazusa)).